A 320-amino-acid polypeptide reads, in one-letter code: ATP-dependent 6-phosphofructokinase (320 aa).

Gly-12 contributes to the ATP binding site. ADP is bound by residues 22–26 (RGVVR) and 55–60 (RYSVSD). ATP is bound by residues 73 to 74 (RF) and 103 to 106 (GDGS). Asp-104 provides a ligand contact to Mg(2+). 126-128 (TID) contacts substrate. Catalysis depends on Asp-128, which acts as the Proton acceptor. Arg-155 contributes to the ADP binding site. Substrate contacts are provided by residues Arg-163 and 170–172 (MGR). Residues 186 to 188 (GCE), Lys-212, and 214 to 216 (KKH) contribute to the ADP site. Substrate is bound by residues Glu-223, Arg-244, and 250–253 (HIQR).

Belongs to the phosphofructokinase type A (PFKA) family. ATP-dependent PFK group I subfamily. Prokaryotic clade 'B1' sub-subfamily. As to quaternary structure, homotetramer. It depends on Mg(2+) as a cofactor.

The protein resides in the cytoplasm. The enzyme catalyses beta-D-fructose 6-phosphate + ATP = beta-D-fructose 1,6-bisphosphate + ADP + H(+). Its pathway is carbohydrate degradation; glycolysis; D-glyceraldehyde 3-phosphate and glycerone phosphate from D-glucose: step 3/4. Its activity is regulated as follows. Allosterically activated by ADP and other diphosphonucleosides, and allosterically inhibited by phosphoenolpyruvate. In terms of biological role, catalyzes the phosphorylation of D-fructose 6-phosphate to fructose 1,6-bisphosphate by ATP, the first committing step of glycolysis. The polypeptide is ATP-dependent 6-phosphofructokinase (Enterobacter cloacae).